The sequence spans 545 residues: Light-independent protochlorophyllide reductase subunit N (545 aa).

[4Fe-4S] cluster is bound by residues Cys-102, Cys-127, and Cys-187.

This sequence belongs to the BchN/ChlN family. In terms of assembly, protochlorophyllide reductase is composed of three subunits; ChlL, ChlN and ChlB. Forms a heterotetramer of two ChlB and two ChlN subunits. It depends on [4Fe-4S] cluster as a cofactor.

It localises to the plastid. The protein localises to the chloroplast. It catalyses the reaction chlorophyllide a + oxidized 2[4Fe-4S]-[ferredoxin] + 2 ADP + 2 phosphate = protochlorophyllide a + reduced 2[4Fe-4S]-[ferredoxin] + 2 ATP + 2 H2O. The protein operates within porphyrin-containing compound metabolism; chlorophyll biosynthesis (light-independent). Its function is as follows. Component of the dark-operative protochlorophyllide reductase (DPOR) that uses Mg-ATP and reduced ferredoxin to reduce ring D of protochlorophyllide (Pchlide) to form chlorophyllide a (Chlide). This reaction is light-independent. The NB-protein (ChlN-ChlB) is the catalytic component of the complex. The polypeptide is Light-independent protochlorophyllide reductase subunit N (Chlamydomonas reinhardtii (Chlamydomonas smithii)).